We begin with the raw amino-acid sequence, 309 residues long: Ankyrin repeat and SOCS box protein 12 (309 aa).

5 ANK repeats span residues 63–92 (VPGT…DVDS), 96–125 (KAQT…SPGG), 129–158 (NNCS…EANV), 171–200 (SCSG…DPDY), and 213–243 (RPRT…NIYL). Positions 268-308 (PRSLLSQVRLVVRRALCQAGQPQAINQLDIPPMLISYLKHQ) constitute an SOCS box domain.

It belongs to the ankyrin SOCS box (ASB) family. As to quaternary structure, interacts with CUL5 and RNF7.

It functions in the pathway protein modification; protein ubiquitination. In terms of biological role, probable substrate-recognition component of a SCF-like ECS (Elongin-Cullin-SOCS-box protein) E3 ubiquitin-protein ligase complex which mediates the ubiquitination and subsequent proteasomal degradation of target proteins. In Homo sapiens (Human), this protein is Ankyrin repeat and SOCS box protein 12 (ASB12).